The following is a 292-amino-acid chain: Lipoyl synthase (292 aa).

[4Fe-4S] cluster-binding residues include Cys34, Cys39, Cys45, Cys60, Cys64, Cys67, and Ser273. Residues 46–262 form the Radical SAM core domain; the sequence is WNKKHATVMI…KYVAYSKGFL (217 aa).

Belongs to the radical SAM superfamily. Lipoyl synthase family. It depends on [4Fe-4S] cluster as a cofactor.

It localises to the cytoplasm. The enzyme catalyses [[Fe-S] cluster scaffold protein carrying a second [4Fe-4S](2+) cluster] + N(6)-octanoyl-L-lysyl-[protein] + 2 oxidized [2Fe-2S]-[ferredoxin] + 2 S-adenosyl-L-methionine + 4 H(+) = [[Fe-S] cluster scaffold protein] + N(6)-[(R)-dihydrolipoyl]-L-lysyl-[protein] + 4 Fe(3+) + 2 hydrogen sulfide + 2 5'-deoxyadenosine + 2 L-methionine + 2 reduced [2Fe-2S]-[ferredoxin]. Its pathway is protein modification; protein lipoylation via endogenous pathway; protein N(6)-(lipoyl)lysine from octanoyl-[acyl-carrier-protein]: step 2/2. In terms of biological role, catalyzes the radical-mediated insertion of two sulfur atoms into the C-6 and C-8 positions of the octanoyl moiety bound to the lipoyl domains of lipoate-dependent enzymes, thereby converting the octanoylated domains into lipoylated derivatives. The protein is Lipoyl synthase of Ehrlichia ruminantium (strain Welgevonden).